The chain runs to 268 residues: Shikimate dehydrogenase (NADP(+)) (268 aa).

Residues 14–16 and T61 contribute to the shikimate site; that span reads SKS. K65 (proton acceptor) is an active-site residue. Shikimate contacts are provided by N86 and D102. NADP(+) is bound by residues 126 to 130, 149 to 154, and M213; these read GAGGA and NRTFSK. Residue Y215 coordinates shikimate. G238 contacts NADP(+).

This sequence belongs to the shikimate dehydrogenase family. As to quaternary structure, homodimer.

The catalysed reaction is shikimate + NADP(+) = 3-dehydroshikimate + NADPH + H(+). Its pathway is metabolic intermediate biosynthesis; chorismate biosynthesis; chorismate from D-erythrose 4-phosphate and phosphoenolpyruvate: step 4/7. Involved in the biosynthesis of the chorismate, which leads to the biosynthesis of aromatic amino acids. Catalyzes the reversible NADPH linked reduction of 3-dehydroshikimate (DHSA) to yield shikimate (SA). This is Shikimate dehydrogenase (NADP(+)) from Haemophilus influenzae (strain PittEE).